We begin with the raw amino-acid sequence, 165 residues long: uncharacterized protein (165 aa).

The RCK C-terminal domain occupies 76–161 (LEQVESALDD…LKRLIREKLT (86 aa)).

This is an uncharacterized protein from Bacillus subtilis (strain 168).